The chain runs to 70 residues: Mu-conotoxin-like Am3.4 (70 aa).

A signal peptide spans 1-20 (MMYKLGVLLIICLLLFPLTA). The propeptide occupies 21–53 (VPQDGDQPADRPAERMQDDISFEHDRFFDPVKR). 3 disulfide bridges follow: Cys54-Cys69, Cys55-Cys65, and Cys61-Cys68. Pro67 is subject to 4-hydroxyproline; partial; in major form. Residue Cys69 is modified to Cysteine amide.

The protein belongs to the conotoxin M superfamily. In terms of processing, contains 3 disulfide bonds. As to expression, expressed by the venom duct.

It localises to the secreted. Mu-conotoxins block voltage-gated sodium channels (Nav). The sequence is that of Mu-conotoxin-like Am3.4 from Conus amadis (Amadis cone).